A 1024-amino-acid chain; its full sequence is MKFFALFIQRPVATTLLTLAITLSGIIGFSLLPVSPLPQVDYPVIMVSASMPGADPETMASSVATPLERALGRIAGVNEMTSTSSLGSTRIILQFDLNRDINGAARDVQAALNAAQSLLPSGMPSRPTYRKMNPSDAPIMIMTLTSDTFSQGQLYDYASTKLAQKIAQTEGVSDVTVGGSSLPAVRVELNPSALFNQGVSLDAVRQAISAANVRRPQGSVDAAETHWQVQANDEIKTAEGYRPLIVHYNNGSPVRLQDVANVIDSVQDVRNAGMSAGQPAVLLVISREPGANIIATVDRIRAELPALRASIPASIQLNIAQDRSPTIRASLDEVERSLVIAVALVILVVFIFLRSGRATLIPAVAVPVSLIGTFAAMYLCGFSLNNLSLMALTIATGFVVDDAIVVLENISRHLEAGVKPMVAALRGVREVGFTVLSMSISLVAVFIPLLLMAGLPGRLFREFAVTLSVAIGISLVISLTLTPMMCAWLLRSHPKGQQQRIRGFGKVLLAIQQGYGRSLNWALGHTRWVMVVLLSTIALNVWLYISIPKTFFPEQDTGRMMGFIQADQSISFQSMQQKLKDFMQIVGADPAVDSVTGFTGGSRTNSGSMFISLKPLSERQETAQQVITRLRGKLAKEPGANLFLSSVQDIRVGGRHSNAAYQFTLLADDLAALREWEPKVRAALAKLPQLADVNSDQQDKGAEMALTYDRETMARLGIDVSEANALLNNAFGQRQISTIYQPLNQYKVVMEVAPEYTQDVSSLDKMFVINSNGQSIPLSYFAKWQPANAPLAVNHQGLSAASTISFNLPDGGSLSEATAAVERAMTELGVPSTVRGAFAGTAQVFQETLKSQLWLIMAAIATVYIVLGILYESYVHPLTILSTLPSAGVGALLALELFDAPFSLIALIGIMLLIGIVKKNAIMMVDFALDAQRNGNISAREAIFQASLLRFRPIIMTTLAALFGALPLVLSSGDGAELRQPLGITIVGGLVVSQLLTLYTTPVIYLYFDRLRNRFSKQPLMKLE.

A run of 12 helical transmembrane segments spans residues 12-32, 333-353, 360-380, 387-407, 435-455, 469-489, 528-548, 853-873, 875-895, 897-917, 953-973, and 984-1004; these read VATT…FSLL, EVER…FIFL, LIPA…MYLC, LSLM…IVVL, VLSM…MAGL, VAIG…CAWL, WVMV…ISIP, LWLI…LYES, VHPL…LLAL, LFDA…IGIV, PIIM…LSSG, and ITIV…TPVI.

The protein belongs to the resistance-nodulation-cell division (RND) (TC 2.A.6) family. MdtC subfamily. Part of a tripartite efflux system composed of MdtA, MdtB and MdtC. MdtC forms a heteromultimer with MdtB.

It is found in the cell inner membrane. In Yersinia pseudotuberculosis serotype O:1b (strain IP 31758), this protein is Multidrug resistance protein MdtC.